We begin with the raw amino-acid sequence, 312 residues long: DNA-directed RNA polymerase subunit alpha (312 aa).

The alpha N-terminal domain (alpha-NTD) stretch occupies residues 1–226 (MIEFEKPNIT…EHLDLFTDLT (226 aa)). The tract at residues 244–312 (DHVLERTIEE…DLGLGLKNDK (69 aa)) is alpha C-terminal domain (alpha-CTD).

It belongs to the RNA polymerase alpha chain family. In terms of assembly, homodimer. The RNAP catalytic core consists of 2 alpha, 1 beta, 1 beta' and 1 omega subunit. When a sigma factor is associated with the core the holoenzyme is formed, which can initiate transcription.

The enzyme catalyses RNA(n) + a ribonucleoside 5'-triphosphate = RNA(n+1) + diphosphate. In terms of biological role, DNA-dependent RNA polymerase catalyzes the transcription of DNA into RNA using the four ribonucleoside triphosphates as substrates. The sequence is that of DNA-directed RNA polymerase subunit alpha from Streptococcus gordonii (strain Challis / ATCC 35105 / BCRC 15272 / CH1 / DL1 / V288).